A 146-amino-acid polypeptide reads, in one-letter code: ATP synthase epsilon chain (146 aa).

Residues 92-116 (ISVDQARRDRDSLRKKLNEHERSEQ) are compositionally biased toward basic and acidic residues. The tract at residues 92–120 (ISVDQARRDRDSLRKKLNEHERSEQDPEV) is disordered.

Belongs to the ATPase epsilon chain family. In terms of assembly, F-type ATPases have 2 components, CF(1) - the catalytic core - and CF(0) - the membrane proton channel. CF(1) has five subunits: alpha(3), beta(3), gamma(1), delta(1), epsilon(1). CF(0) has three main subunits: a, b and c.

The protein localises to the cell membrane. Functionally, produces ATP from ADP in the presence of a proton gradient across the membrane. This chain is ATP synthase epsilon chain, found in Cutibacterium acnes (strain DSM 16379 / KPA171202) (Propionibacterium acnes).